The following is a 2620-amino-acid chain: Ankyrin repeat and KH domain-containing protein mask-1 (2620 aa).

12 ANK repeats span residues Ser254–Val283, Asn288–Asp318, Glu361–Pro390, Glu402–Leu431, Ile437–Glu466, Lys470–Val502, Thr507–Ala536, Lys538–Gln566, Gln568–Phe597, Asp600–Phe629, Asn634–Leu663, and Asp667–Met697. 3 disordered regions span residues Lys699–Asp726, His994–Ala1032, and Ser1192–Lys1229. The segment covering Thr1012–Gln1029 has biased composition (polar residues). Positions Ser1192 to Gln1206 are enriched in low complexity. Residues Thr1210–Lys1221 are compositionally biased toward basic and acidic residues. ANK repeat units lie at residues Thr1234 to His1263, Lys1267 to Ala1296, Thr1301 to His1330, Ser1334 to Ser1363, Leu1369 to Ala1398, Asn1403 to His1432, Thr1436 to Ala1465, Thr1471 to Val1500, Lys1504 to Met1533, and Arg1537 to Asn1566. The stretch at Ala1596–Glu1648 forms a coiled coil. Disordered regions lie at residues Gln1621 to Pro1720 and Lys1759 to Thr1804. Residues Lys1636–Ala1647 are compositionally biased toward basic and acidic residues. Positions Glu1648 to Pro1661 are enriched in acidic residues. Low complexity-rich tracts occupy residues Pro1665–Glu1681 and Lys1769–Ser1791. One can recognise a KH domain in the interval Glu1807–Ile1873. A compositionally biased stretch (polar residues) spans Ala1899 to Asp1913. Disordered regions lie at residues Ala1899–Trp1962, Leu1976–Glu2010, Ser2067–Asn2143, Asn2267–Gly2294, Ser2307–Gln2343, Gln2372–Met2391, Gln2429–Tyr2448, and Gln2496–Trp2620. Residues Ala1917–Ser1946 show a composition bias toward low complexity. Polar residues predominate over residues Ile1982–Pro1993. Low complexity-rich tracts occupy residues Ser1994 to Asp2006, Ser2067 to Gln2078, and Ser2100 to Ser2118. Composition is skewed to polar residues over residues Asn2267–Pro2286 and Arg2325–Ile2339. Over residues Ser2505–Arg2528 the composition is skewed to polar residues. Positions Arg2535 to Pro2547 are enriched in pro residues. The span at Ser2552–Thr2565 shows a compositional bias: polar residues. 2 stretches are compositionally biased toward low complexity: residues Ser2566–Gln2588 and Gln2597–Trp2620.

It belongs to the mask family.

The protein localises to the cytoplasm. This is Ankyrin repeat and KH domain-containing protein mask-1 from Caenorhabditis elegans.